A 97-amino-acid chain; its full sequence is Secreted LysM effector Mg1LysM (97 aa).

The signal sequence occupies residues 1–18 (MQFTALVAALLSVAAVQA). A LysM domain is found at 37–84 (QQYVARSGDTLTKIAQEIYHDVVGVCDIARANNLADPNRIDAGTPYTI). Gly44, Thr48, Asn74, and Ile76 together coordinate chitin.

The protein belongs to the secreted LysM effector family. As to quaternary structure, forms homodimers in a chitin-independent manner through interactions at the N-termini of Mg1LysM monomers. Homodimers are further polymerized in a chitin-dependent manner.

The protein localises to the secreted. Its subcellular location is the cell wall. Functionally, secreted effector that enables the plant pathogenic fungus to manipulate host defenses for successful infection. Binds chitin but not cellulose or xylan. Chitin-induced polymerization of homodimers forms a contiguous Mg1LysM highly oligomeric super-complexe that is anchored to the chitin in the fungal cell wall to prevent hydrolysis by host chitinases. The protein is Secreted LysM effector Mg1LysM of Zymoseptoria tritici (strain ST99CH_3D7).